The chain runs to 173 residues: MPRSNRNDNFIDKSFTVMADLIVKLLPINARSKEAYVYYRDGLSAQNDGDYAEALENYDEALKLEDNPTDRGETLKNMAIIYMSNGEEERAIETYRRALDENSNQPSCLKNMGLIFEKWGRIAEEDGRQDDADRWFDQAAEAWTQAVRLNPGGYLDIENWLKSTGRSNVDVYF.

TPR repeat units lie at residues 35–68, 72–105, and 120–153; these read AYVYYRDGLSAQNDGDYAEALENYDEALKLEDNP, GETLKNMAIIYMSNGEEERAIETYRRALDENSNQ, and GRIAEEDGRQDDADRWFDQAAEAWTQAVRLNPGG.

The protein belongs to the Ycf3 family.

Its subcellular location is the cellular thylakoid membrane. Functionally, essential for the assembly of the photosystem I (PSI) complex. May act as a chaperone-like factor to guide the assembly of the PSI subunits. The sequence is that of Photosystem I assembly protein Ycf3 from Parasynechococcus marenigrum (strain WH8102).